Consider the following 146-residue polypeptide: UPF0178 protein BAMEG_1545 (146 aa).

Belongs to the UPF0178 family.

The polypeptide is UPF0178 protein BAMEG_1545 (Bacillus anthracis (strain CDC 684 / NRRL 3495)).